We begin with the raw amino-acid sequence, 953 residues long: Dual serine/threonine and tyrosine protein kinase (953 aa).

A Protein kinase domain is found at 665 to 926 (PKLEREIGRG…VQSKLQDIYT (262 aa)). ATP-binding positions include 671–679 (IGRGQYGVV) and lysine 694. Catalysis depends on aspartate 791, which acts as the Proton acceptor. Positions 932 to 953 (REAEGGGGGGAKEQQNLKSDTL) are disordered.

This sequence belongs to the protein kinase superfamily. Ser/Thr protein kinase family.

The protein resides in the cytoplasm. The protein localises to the cell membrane. Its subcellular location is the apical cell membrane. It localises to the basolateral cell membrane. It is found in the cell junction. It carries out the reaction L-seryl-[protein] + ATP = O-phospho-L-seryl-[protein] + ADP + H(+). The enzyme catalyses L-threonyl-[protein] + ATP = O-phospho-L-threonyl-[protein] + ADP + H(+). The catalysed reaction is L-tyrosyl-[protein] + ATP = O-phospho-L-tyrosyl-[protein] + ADP + H(+). Its function is as follows. May act as a positive regulator of ERK phosphorylation downstream of fibroblast growth factor-receptor activation. May induce both caspase-dependent apoptosis and caspase-independent cell death. May play a role in the embryonic development. The polypeptide is Dual serine/threonine and tyrosine protein kinase (Strongylocentrotus purpuratus (Purple sea urchin)).